We begin with the raw amino-acid sequence, 458 residues long: tRNA-2-methylthio-N(6)-dimethylallyladenosine synthase (458 aa).

Positions 2–118 (PKLYIKTYGC…VFEHVDGILR (117 aa)) constitute an MTTase N-terminal domain. [4Fe-4S] cluster-binding residues include Cys-11, Cys-47, Cys-81, Cys-170, Cys-174, and Cys-177. The 234-residue stretch at 156 to 389 (PGVRSTAYVS…LAVVNEIAIR (234 aa)) folds into the Radical SAM core domain. The region spanning 392 to 455 (RDLVGTVQEV…GFTLYGVPCP (64 aa)) is the TRAM domain.

This sequence belongs to the methylthiotransferase family. MiaB subfamily. In terms of assembly, monomer. [4Fe-4S] cluster is required as a cofactor.

The protein resides in the cytoplasm. The catalysed reaction is N(6)-dimethylallyladenosine(37) in tRNA + (sulfur carrier)-SH + AH2 + 2 S-adenosyl-L-methionine = 2-methylsulfanyl-N(6)-dimethylallyladenosine(37) in tRNA + (sulfur carrier)-H + 5'-deoxyadenosine + L-methionine + A + S-adenosyl-L-homocysteine + 2 H(+). Catalyzes the methylthiolation of N6-(dimethylallyl)adenosine (i(6)A), leading to the formation of 2-methylthio-N6-(dimethylallyl)adenosine (ms(2)i(6)A) at position 37 in tRNAs that read codons beginning with uridine. The protein is tRNA-2-methylthio-N(6)-dimethylallyladenosine synthase of Akkermansia muciniphila (strain ATCC BAA-835 / DSM 22959 / JCM 33894 / BCRC 81048 / CCUG 64013 / CIP 107961 / Muc).